Reading from the N-terminus, the 212-residue chain is Pyrrolidone-carboxylate peptidase (212 aa).

Active-site residues include glutamate 78, cysteine 141, and histidine 165.

Belongs to the peptidase C15 family. In terms of assembly, homotetramer.

The protein resides in the cytoplasm. The catalysed reaction is Release of an N-terminal pyroglutamyl group from a polypeptide, the second amino acid generally not being Pro.. Functionally, removes 5-oxoproline from various penultimate amino acid residues except L-proline. This Staphylococcus haemolyticus (strain JCSC1435) protein is Pyrrolidone-carboxylate peptidase.